Reading from the N-terminus, the 112-residue chain is ATP synthase subunit c (112 aa).

Transmembrane regions (helical) follow at residues 36 to 56 and 81 to 101; these read FSVL…AIGM and MFIA…IALI.

The protein belongs to the ATPase C chain family. F-type ATPases have 2 components, F(1) - the catalytic core - and F(0) - the membrane proton channel. F(1) has five subunits: alpha(3), beta(3), gamma(1), delta(1), epsilon(1). F(0) has three main subunits: a(1), b(2) and c(10-14). The alpha and beta chains form an alternating ring which encloses part of the gamma chain. F(1) is attached to F(0) by a central stalk formed by the gamma and epsilon chains, while a peripheral stalk is formed by the delta and b chains.

Its subcellular location is the cell inner membrane. In terms of biological role, f(1)F(0) ATP synthase produces ATP from ADP in the presence of a proton or sodium gradient. F-type ATPases consist of two structural domains, F(1) containing the extramembraneous catalytic core and F(0) containing the membrane proton channel, linked together by a central stalk and a peripheral stalk. During catalysis, ATP synthesis in the catalytic domain of F(1) is coupled via a rotary mechanism of the central stalk subunits to proton translocation. Functionally, key component of the F(0) channel; it plays a direct role in translocation across the membrane. A homomeric c-ring of between 10-14 subunits forms the central stalk rotor element with the F(1) delta and epsilon subunits. This is ATP synthase subunit c from Campylobacter jejuni (strain RM1221).